The sequence spans 852 residues: RNA-binding protein 10 (852 aa).

Composition is skewed to basic and acidic residues over residues 1-14 (MEYE…DRTG) and 21-45 (RSQD…RSYP). A disordered region spans residues 1–78 (MEYERRGGRG…RGQLQSHGVQ (78 aa)). In terms of domain architecture, RRM 1 spans 37 to 132 (RDMDYRSYPR…QKVSMHYSDP (96 aa)). Residue S61 is modified to Phosphoserine. The RanBP2-type zinc finger occupies 135-165 (KINEDWLCNKCGVQNFKRREKCFKCGVPKSE). The region spanning 223–307 (DTIILRNLNP…KTINVEFAKG (85 aa)) is the RRM 2 domain. Position 306 is an N6-acetyllysine (K306). Disordered regions lie at residues 343–365 (GGES…QQDE), 386–410 (KGPG…EGGT), 426–446 (APGL…ATNS), 459–489 (SELQ…YPVP), 542–568 (EQSA…HKTK), and 634–675 (DLPK…EEKL). A compositionally biased stretch (polar residues) spans 430–446 (YQQSAEGSSGQGTATNS). Over residues 463 to 484 (SPTHPSSALPPATSPTAPESYS) the composition is skewed to low complexity. Over residues 545 to 561 (ADGHKDTGASSKEGKEK) the composition is skewed to basic and acidic residues. A phosphoserine mark is found at S640, S645, S655, S658, and S660. Positions 665–675 (ERGGPEREEKL) are enriched in basic and acidic residues. The C2H2-type; atypical zinc finger occupies 681–706 (LACLLCRRQFPSKEALIRHQQLSGLH). Phosphoserine occurs at positions 703, 719, and 767. Residues 740–783 (AAERREKYGIPEPPEPKRRKYGGISTASVDFEQPTRDGLGSDNI) form a disordered region. Residues 780-826 (SDNIGSRMLQAMGWKEGSGLGRKKQGIVTPIEAQTRVRGSGLGARGS) form the G-patch domain. Omega-N-methylarginine is present on R824.

As to quaternary structure, associates with the spliceosome. Component of a large chromatin remodeling complex, at least composed of MYSM1, PCAF, RBM10 and KIF11/TRIP5.

It is found in the nucleus. Binds to ssRNA containing the consensus sequence 5'-AGGUAA-3'. May be involved in post-transcriptional processing, most probably in mRNA splicing. Binds to RNA homopolymers, with a preference for poly(G) and poly(U) and little for poly(A). May bind to specific miRNA hairpins. This chain is RNA-binding protein 10, found in Rattus norvegicus (Rat).